A 418-amino-acid chain; its full sequence is D-amino acid dehydrogenase (418 aa).

Residue Val3–Tyr17 coordinates FAD.

This sequence belongs to the DadA oxidoreductase family. The cofactor is FAD.

The enzyme catalyses a D-alpha-amino acid + A + H2O = a 2-oxocarboxylate + AH2 + NH4(+). Its pathway is amino-acid degradation; D-alanine degradation; NH(3) and pyruvate from D-alanine: step 1/1. Functionally, oxidative deamination of D-amino acids. The protein is D-amino acid dehydrogenase of Granulibacter bethesdensis (strain ATCC BAA-1260 / CGDNIH1).